Here is a 335-residue protein sequence, read N- to C-terminus: tRNA N6-adenosine threonylcarbamoyltransferase (335 aa).

Positions 109, 113, and 130 each coordinate a divalent metal cation. Substrate is bound by residues 130–134 (YVSGG), aspartate 162, glycine 177, glutamate 181, and asparagine 266. Residue aspartate 294 coordinates a divalent metal cation.

The protein belongs to the KAE1 / TsaD family. Component of the EKC/KEOPS complex composed of at least GON7, TP53RK, TPRKB, OSGEP and LAGE3; the whole complex dimerizes. It depends on a divalent metal cation as a cofactor. Widely expressed at low level. Expressed at intermediate level in lung. Weakly expressed in testis, skeletal muscle, kidney, liver, spleen, brain and heart.

The protein localises to the cytoplasm. Its subcellular location is the nucleus. It catalyses the reaction L-threonylcarbamoyladenylate + adenosine(37) in tRNA = N(6)-L-threonylcarbamoyladenosine(37) in tRNA + AMP + H(+). Its function is as follows. Component of the EKC/KEOPS complex that is required for the formation of a threonylcarbamoyl group on adenosine at position 37 (t(6)A37) in tRNAs that read codons beginning with adenine. The complex is probably involved in the transfer of the threonylcarbamoyl moiety of threonylcarbamoyl-AMP (TC-AMP) to the N6 group of A37. OSGEP likely plays a direct catalytic role in this reaction, but requires other protein(s) of the complex to fulfill this activity. This is tRNA N6-adenosine threonylcarbamoyltransferase (Osgep) from Mus musculus (Mouse).